The chain runs to 510 residues: Arginine biosynthesis bifunctional protein ArgJ, mitochondrial (510 aa).

Residues 57 to 70 are compositionally biased toward polar residues; the sequence is TSTNEPSAATTNVP. Residues 57–76 are disordered; that stretch reads TSTNEPSAATTNVPHPQEAP. Residues threonine 222, lysine 248, threonine 267, and glutamate 364 each coordinate substrate. Residue threonine 267 is the Nucleophile of the active site.

The protein belongs to the ArgJ family. As to quaternary structure, heterodimer of an alpha and a beta chain. Post-translationally, the alpha and beta chains are autoproteolytically processed from a single precursor protein within the mitochondrion.

Its subcellular location is the mitochondrion matrix. The catalysed reaction is N(2)-acetyl-L-ornithine + L-glutamate = N-acetyl-L-glutamate + L-ornithine. It carries out the reaction L-glutamate + acetyl-CoA = N-acetyl-L-glutamate + CoA + H(+). Its pathway is amino-acid biosynthesis; L-arginine biosynthesis; L-ornithine and N-acetyl-L-glutamate from L-glutamate and N(2)-acetyl-L-ornithine (cyclic): step 1/1. The protein operates within amino-acid biosynthesis; L-arginine biosynthesis; N(2)-acetyl-L-ornithine from L-glutamate: step 1/4. Its function is as follows. Catalyzes two activities which are involved in the cyclic version of arginine biosynthesis: the synthesis of acetylglutamate from glutamate and acetyl-CoA, and of ornithine by transacetylation between acetylornithine and glutamate. In Malassezia globosa (strain ATCC MYA-4612 / CBS 7966) (Dandruff-associated fungus), this protein is Arginine biosynthesis bifunctional protein ArgJ, mitochondrial.